The sequence spans 866 residues: FHIP family protein v1g243165 (866 aa).

2 disordered regions span residues 739–761 (RDGP…ASTS) and 781–814 (GSTA…ESQT). The segment covering 751–761 (SIGSIGSASTS) has biased composition (low complexity).

This sequence belongs to the FHIP family.

This Nematostella vectensis (Starlet sea anemone) protein is FHIP family protein v1g243165.